Here is a 545-residue protein sequence, read N- to C-terminus: E3 ubiquitin-protein ligase ipaH9.8 (545 aa).

Residues 1 to 242 (MLPINNNFSL…YHGPRIYFSM (242 aa)) form an interaction with target proteins region. LRR repeat units lie at residues 57–77 (NSDE…NLPA), 78–99 (QITL…PVTL), 100–117 (KKLY…VLPP), 118–139 (ALES…PDSL), 140–157 (LTMN…SLPQ), 158–179 (ALKN…SEGN), 182–203 (VVRE…ILNL), and 205–228 (NECS…QRLT). A linker region spans residues 243 to 250 (SDGQQNTL). Residues 251 to 545 (HRPLADAVTA…SENGSQLHHS (295 aa)) are E3 ubiquitin-protein ligase catalytic domain. Positions 253 to 545 (PLADAVTAWF…SENGSQLHHS (293 aa)) constitute an NEL domain. Catalysis depends on Cys337, which acts as the Glycyl thioester intermediate.

Belongs to the LRR-containing bacterial E3 ligase family. Also interacts with human and mouse U2AF1 (U2AF35). Post-translationally, ubiquitinated in the presence of host E1 ubiquitin-activating enzyme, E2 ubiquitin-conjugating enzyme and ubiquitin.

The protein localises to the secreted. It is found in the host cytoplasm. Its subcellular location is the host nucleus. It catalyses the reaction S-ubiquitinyl-[E2 ubiquitin-conjugating enzyme]-L-cysteine + [acceptor protein]-L-lysine = [E2 ubiquitin-conjugating enzyme]-L-cysteine + N(6)-ubiquitinyl-[acceptor protein]-L-lysine.. Its activity is regulated as follows. Exists in an autoinhibited state in the absence of substrate protein, due to interactions of the leucine-rich repeats with NEL domain. Is activated upon binding to a substrate protein. Its function is as follows. Effector E3 ubiquitin ligase that interferes with host's ubiquitination pathway and modulates the acute inflammatory responses, thus facilitating bacterial colonization within the host cell. Interacts with IKBKG (NEMO) and TNIP1 (ABIN-1), a ubiquitin-binding adapter protein, which results in TNIP1-dependent 'Lys-27'-linked polyubiquitination of IKBKG. Consequently, polyubiquitinated IKBKG undergoes proteasome-dependent degradation, which perturbs NF-kappa-B activation during bacterial infection. Mediates polyubiquitination of host U2AF1, leading to its proteasomal degradation. Catalyzes 'Lys-48'-linked polyubiquitination and subsequent degradation of a subset of host guanylate-binding proteins (GBP1, GBP2, GBP4 and GBP6), thereby suppressing host cell defense. In contrast, host GBP3 and GBP7 are not ubiquitinated by IpaH9.8. Uses UBE2D2 (UBCH5B) as an E2 ubiquitin-conjugating enzyme. The polypeptide is E3 ubiquitin-protein ligase ipaH9.8 (ipaH9.8) (Shigella dysenteriae serotype 1 (strain Sd197)).